Reading from the N-terminus, the 346-residue chain is RNA polymerase II holoenzyme cyclin-like subunit (346 aa).

Residues 59 to 158 (NLLIKLGRRL…EMDSYLFLHH (100 aa)) enclose the Cyclin N-terminal domain.

The protein belongs to the cyclin family. Cyclin C subfamily. In terms of assembly, component of the SRB8-11 complex, a regulatory module of the Mediator complex.

It is found in the nucleus. Component of the SRB8-11 complex. The SRB8-11 complex is a regulatory module of the Mediator complex which is itself involved in regulation of basal and activated RNA polymerase II-dependent transcription. The SRB8-11 complex may be involved in the transcriptional repression of a subset of genes regulated by Mediator. It may inhibit the association of the Mediator complex with RNA polymerase II to form the holoenzyme complex. The SRB8-11 complex phosphorylates the C-terminal domain (CTD) of the largest subunit of RNA polymerase II. This chain is RNA polymerase II holoenzyme cyclin-like subunit (SSN8), found in Scheffersomyces stipitis (strain ATCC 58785 / CBS 6054 / NBRC 10063 / NRRL Y-11545) (Yeast).